Reading from the N-terminus, the 70-residue chain is U2-agatoxin-Ao1q (70 aa).

A signal peptide spans 1–20 (MRSIISLLLISAMVFSMIAA). Residues 21–34 (VPEEEGLQLSEDER) constitute a propeptide that is removed on maturation. Disulfide bonds link C44-C58 and C52-C68. L69 carries the post-translational modification Leucine amide.

The protein belongs to the neurotoxin 01 (U2-agtx) family. Post-translationally, does not contain a cysteine at position 53 which disrupts the cysteine framework. As to expression, expressed by the venom gland.

Its subcellular location is the secreted. Functionally, insect active toxin causing rapid but reversible paralysis in crickets. No activity shown in mammals. Does not show effect on mammalian voltage-gated calcium channels. This Agelena orientalis (Funnel-web spider) protein is U2-agatoxin-Ao1q.